A 404-amino-acid polypeptide reads, in one-letter code: Starvation-sensing protein RspA (404 aa).

The protein belongs to the mandelate racemase/muconate lactonizing enzyme family.

Functionally, probably involved in the degradation of homoserine lactone (HSL) or of a metabolite of HSL that signals starvation. The sequence is that of Starvation-sensing protein RspA from Escherichia coli (strain K12).